Here is a 90-residue protein sequence, read N- to C-terminus: Small ribosomal subunit protein bS18 (90 aa).

It belongs to the bacterial ribosomal protein bS18 family. As to quaternary structure, part of the 30S ribosomal subunit. Forms a tight heterodimer with protein bS6.

Its function is as follows. Binds as a heterodimer with protein bS6 to the central domain of the 16S rRNA, where it helps stabilize the platform of the 30S subunit. This chain is Small ribosomal subunit protein bS18, found in Bordetella bronchiseptica (strain ATCC BAA-588 / NCTC 13252 / RB50) (Alcaligenes bronchisepticus).